Consider the following 326-residue polypeptide: MCGMRGRVVARAVVVGCGVAGLSAAIALRERGFGVRVVAREPPERTTSAVAAAVWYPYRAYPEERVLSWGARTFEVFRGLAADPRTGVRLGEGVELLRRSAPGEPWWREAVSGFRRCREEELPPGCRGGYRFVAPVAEMPAYLAYLLDRLRGAGGTLELREVSSLEEAGEGADVVVNCSGVWARELARDPSVFPIRGQILRVANPGLERFVLDEENPAGLTYIVPRSGDCVLGGTAEEGRWSTEPDPATAEAILRRCSALEPRLRGARVLEHRAGLRPGRPEVRLELEELPGGTPCVHNYGHGGSGVTLSWGCAEEAAALAGAALS.

The FAD site is built by glycine 18, valine 19, threonine 46, threonine 47, serine 48, alanine 52, alanine 53, valine 162, and serine 179. The D-proline site is built by tyrosine 222 and arginine 277. Tyrosine 222 and arginine 277 together coordinate D-serine. Residues arginine 277, glycine 303, glycine 304, glycine 306, and threonine 308 each coordinate FAD. D-proline is bound at residue glycine 304. Glycine 304 is a binding site for D-serine.

The protein belongs to the DAMOX/DASOX family. Monomer. The cofactor is FAD.

The protein localises to the cytoplasm. The protein resides in the secreted. It localises to the cell wall. It catalyses the reaction a D-alpha-amino acid + O2 + H2O = a 2-oxocarboxylate + H2O2 + NH4(+). The enzyme catalyses D-valine + O2 + H2O = 3-methyl-2-oxobutanoate + H2O2 + NH4(+). It carries out the reaction D-leucine + O2 + H2O = 4-methyl-2-oxopentanoate + H2O2 + NH4(+). The catalysed reaction is D-isoleucine + O2 + H2O = (R)-3-methyl-2-oxopentanoate + H2O2 + NH4(+). It catalyses the reaction D-tyrosine + O2 + H2O = 3-(4-hydroxyphenyl)pyruvate + H2O2 + NH4(+). The enzyme catalyses D-threonine + O2 + H2O = (S)-3-hydroxy-2-oxobutanoate + H2O2 + NH4(+). Its activity is regulated as follows. Inhibited by benzoate and phenylmethylsulfonyl fluoride (PMSF). Weakly inhibited by anthranilate, crotonate, and the amino acid-modifying agents dithionitrobenzoic acid and diethyl pyrocarbonate. Not inhibited by malonate, meso-tartrate, D-malate, or the amino acid-modifying agents iodoacetic acid or butane-2,3-dione. Functionally, catalyzes the oxidative deamination of D-amino acids with broad substrate specificity. The polypeptide is D-amino-acid oxidase (Rubrobacter xylanophilus (strain DSM 9941 / JCM 11954 / NBRC 16129 / PRD-1)).